The sequence spans 72 residues: SRY-related protein MG43 (72 aa).

The HMG box DNA-binding region spans 1–69; it reads VKRPMNAFMV…KHMADYPDYK (69 aa).

It localises to the nucleus. The chain is SRY-related protein MG43 from Tarentola mauritanica (Common wall gecko).